We begin with the raw amino-acid sequence, 411 residues long: Adenylosuccinate synthetase (411 aa).

GTP contacts are provided by residues 11 to 17 (GDEGKGK) and 39 to 41 (GHT). Asp12 acts as the Proton acceptor in catalysis. Mg(2+)-binding residues include Asp12 and Gly39. IMP contacts are provided by residues 12–15 (DEGK), 37–40 (NAGH), Thr121, Arg135, Gln215, Thr230, and Arg294. Residue His40 is the Proton donor of the active site. Position 290-296 (290-296 (TTTKRPR)) interacts with substrate. GTP is bound by residues Arg296, 322–324 (KLD), and 400–402 (STS).

The protein belongs to the adenylosuccinate synthetase family. Homodimer. The cofactor is Mg(2+).

Its subcellular location is the cytoplasm. The catalysed reaction is IMP + L-aspartate + GTP = N(6)-(1,2-dicarboxyethyl)-AMP + GDP + phosphate + 2 H(+). Its pathway is purine metabolism; AMP biosynthesis via de novo pathway; AMP from IMP: step 1/2. Its function is as follows. Plays an important role in the de novo pathway of purine nucleotide biosynthesis. Catalyzes the first committed step in the biosynthesis of AMP from IMP. In Helicobacter pylori (strain ATCC 700392 / 26695) (Campylobacter pylori), this protein is Adenylosuccinate synthetase.